Consider the following 156-residue polypeptide: Ribosome maturation factor RimP (156 aa).

It belongs to the RimP family.

It localises to the cytoplasm. Required for maturation of 30S ribosomal subunits. This is Ribosome maturation factor RimP from Bacillus cereus (strain B4264).